The following is a 454-amino-acid chain: Notoamide E oxidase notB (454 aa).

A helical membrane pass occupies residues 15 to 35 (SPAELTVIIVGLGIAGLTAAI). The FAD site is built by Glu-48 and Gly-61. Asn-75 carries an N-linked (GlcNAc...) asparagine glycan. Arg-121 serves as a coordination point for FAD. Catalysis depends on residues Arg-199 and Tyr-229. The FAD site is built by Asp-322 and Gly-335.

The protein belongs to the paxM FAD-dependent monooxygenase family. Requires FAD as cofactor.

It localises to the membrane. The enzyme catalyses notoamide E + NADPH + O2 + H(+) = notoamide C + NADP(+) + H2O. It carries out the reaction notoamide E + NADPH + O2 + H(+) = notoamide D + NADP(+) + H2O. It participates in alkaloid biosynthesis. In terms of biological role, FAD-dependent monooxygenase; part of the gene cluster that mediates the biosynthesis of notoamide, a fungal indole alkaloid that belongs to a family of natural products containing a characteristic bicyclo[2.2.2]diazaoctane core. The first step of notoamide biosynthesis involves coupling of L-proline and L-tryptophan by the bimodular NRPS notE, to produce cyclo-L-tryptophan-L-proline called brevianamide F. The reverse prenyltransferase notF then acts as a deoxybrevianamide E synthase and converts brevianamide F to deoxybrevianamide E via reverse prenylation at C-2 of the indole ring leading to the bicyclo[2.2.2]diazaoctane core. Deoxybrevianamide E is further hydroxylated at C-6 of the indole ring, likely catalyzed by the cytochrome P450 monooxygenase notG, to yield 6-hydroxy-deoxybrevianamide E. 6-hydroxy-deoxybrevianamide E is a specific substrate of the prenyltransferase notC for normal prenylation at C-7 to produce 6-hydroxy-7-prenyl-deoxybrevianamide, also called notoamide S. As the proposed pivotal branching point in notoamide biosynthesis, notoamide S can be diverted to notoamide E through an oxidative pyran ring closure putatively catalyzed by either notH cytochrome P450 monooxygenase or the notD FAD-linked oxidoreductase. This step would be followed by an indole 2,3-epoxidation-initiated pinacol-like rearrangement catalyzed by the notB FAD-dependent monooxygenase leading to the formation of notoamide C and notoamide D. On the other hand notoamide S is converted to notoamide T by notH (or notD), a bifunctional oxidase that also functions as the intramolecular Diels-Alderase responsible for generation of (+)-notoamide T. To generate antipodal (-)-notoaminide T, notH' (or notD') in Aspergillus versicolor is expected to catalyze a Diels-Alder reaction leading to the opposite stereochemistry. The remaining oxidoreductase notD (or notH) likely catalyzes the oxidative pyran ring formation to yield (+)-stephacidin A. The FAD-dependent monooxygenase notI is highly similar to notB and is predicted to catalyze a similar conversion from (+)-stephacidin A to (-)-notoamide B via the 2,3-epoxidation of (+)-stephacidin A followed by a pinacol-type rearrangement. Finally, it remains unclear which enzyme could be responsible for the final hydroxylation steps leading to notoamide A and sclerotiamide. The chain is Notoamide E oxidase notB from Aspergillus sp. (strain MF297-2).